The primary structure comprises 288 residues: ATP synthase gamma chain (288 aa).

The protein belongs to the ATPase gamma chain family. In terms of assembly, F-type ATPases have 2 components, CF(1) - the catalytic core - and CF(0) - the membrane proton channel. CF(1) has five subunits: alpha(3), beta(3), gamma(1), delta(1), epsilon(1). CF(0) has three main subunits: a, b and c.

It is found in the cell inner membrane. In terms of biological role, produces ATP from ADP in the presence of a proton gradient across the membrane. The gamma chain is believed to be important in regulating ATPase activity and the flow of protons through the CF(0) complex. This chain is ATP synthase gamma chain, found in Actinobacillus pleuropneumoniae serotype 5b (strain L20).